Consider the following 147-residue polypeptide: Methylglyoxal synthase (147 aa).

In terms of domain architecture, MGS-like spans 4 to 147 (VSVPATKRIA…LLNFELLCES (144 aa)). Residues histidine 17, lysine 21, 43-46 (TGTT), and 63-64 (SG) each bind substrate. Catalysis depends on aspartate 69, which acts as the Proton donor/acceptor. Histidine 96 provides a ligand contact to substrate.

The protein belongs to the methylglyoxal synthase family.

It carries out the reaction dihydroxyacetone phosphate = methylglyoxal + phosphate. Its function is as follows. Catalyzes the formation of methylglyoxal from dihydroxyacetone phosphate. This is Methylglyoxal synthase from Leptospira borgpetersenii serovar Hardjo-bovis (strain JB197).